A 427-amino-acid chain; its full sequence is Serine/threonine-protein kinase AFC2 (427 aa).

Residues 98–423 (YKIYSKMGEG…AREALRHPFF (326 aa)) enclose the Protein kinase domain. Residues 104–112 (MGEGTFGQV) and K127 each bind ATP. D223 serves as the catalytic Proton acceptor.

This sequence belongs to the protein kinase superfamily. CMGC Ser/Thr protein kinase family. Lammer subfamily.

The catalysed reaction is L-seryl-[protein] + ATP = O-phospho-L-seryl-[protein] + ADP + H(+). It carries out the reaction L-threonyl-[protein] + ATP = O-phospho-L-threonyl-[protein] + ADP + H(+). It catalyses the reaction L-tyrosyl-[protein] + ATP = O-phospho-L-tyrosyl-[protein] + ADP + H(+). The polypeptide is Serine/threonine-protein kinase AFC2 (AFC2) (Arabidopsis thaliana (Mouse-ear cress)).